The following is a 122-amino-acid chain: Large ribosomal subunit protein uL18 (122 aa).

The protein belongs to the universal ribosomal protein uL18 family. As to quaternary structure, part of the 50S ribosomal subunit; part of the 5S rRNA/L5/L18/L25 subcomplex. Contacts the 5S and 23S rRNAs.

This is one of the proteins that bind and probably mediate the attachment of the 5S RNA into the large ribosomal subunit, where it forms part of the central protuberance. The sequence is that of Large ribosomal subunit protein uL18 from Mycobacterium avium (strain 104).